Consider the following 333-residue polypeptide: Holliday junction branch migration complex subunit RuvB (333 aa).

The tract at residues 1-182 (MDERLVSGSA…FGVISRLEYY (182 aa)) is large ATPase domain (RuvB-L). Residues L21, R22, G63, K66, T67, T68, 129–131 (EDY), R172, Y182, and R219 each bind ATP. T67 contacts Mg(2+). Residues 183 to 253 (QVDQLAQIIE…LAVEALERLQ (71 aa)) form a small ATPAse domain (RuvB-S) region. Residues 256-333 (RLGLDHIDHK…AHLGMEVPKR (78 aa)) are head domain (RuvB-H). 2 residues coordinate DNA: R311 and R316.

It belongs to the RuvB family. Homohexamer. Forms an RuvA(8)-RuvB(12)-Holliday junction (HJ) complex. HJ DNA is sandwiched between 2 RuvA tetramers; dsDNA enters through RuvA and exits via RuvB. An RuvB hexamer assembles on each DNA strand where it exits the tetramer. Each RuvB hexamer is contacted by two RuvA subunits (via domain III) on 2 adjacent RuvB subunits; this complex drives branch migration. In the full resolvosome a probable DNA-RuvA(4)-RuvB(12)-RuvC(2) complex forms which resolves the HJ.

Its subcellular location is the cytoplasm. It carries out the reaction ATP + H2O = ADP + phosphate + H(+). The RuvA-RuvB-RuvC complex processes Holliday junction (HJ) DNA during genetic recombination and DNA repair, while the RuvA-RuvB complex plays an important role in the rescue of blocked DNA replication forks via replication fork reversal (RFR). RuvA specifically binds to HJ cruciform DNA, conferring on it an open structure. The RuvB hexamer acts as an ATP-dependent pump, pulling dsDNA into and through the RuvAB complex. RuvB forms 2 homohexamers on either side of HJ DNA bound by 1 or 2 RuvA tetramers; 4 subunits per hexamer contact DNA at a time. Coordinated motions by a converter formed by DNA-disengaged RuvB subunits stimulates ATP hydrolysis and nucleotide exchange. Immobilization of the converter enables RuvB to convert the ATP-contained energy into a lever motion, pulling 2 nucleotides of DNA out of the RuvA tetramer per ATP hydrolyzed, thus driving DNA branch migration. The RuvB motors rotate together with the DNA substrate, which together with the progressing nucleotide cycle form the mechanistic basis for DNA recombination by continuous HJ branch migration. Branch migration allows RuvC to scan DNA until it finds its consensus sequence, where it cleaves and resolves cruciform DNA. The chain is Holliday junction branch migration complex subunit RuvB from Geobacillus thermodenitrificans (strain NG80-2).